A 295-amino-acid chain; its full sequence is Bifunctional protein FolD (295 aa).

Residues 165–167 (GRG), Ser-192, and Ile-233 each bind NADP(+).

The protein belongs to the tetrahydrofolate dehydrogenase/cyclohydrolase family. As to quaternary structure, homodimer.

It catalyses the reaction (6R)-5,10-methylene-5,6,7,8-tetrahydrofolate + NADP(+) = (6R)-5,10-methenyltetrahydrofolate + NADPH. The enzyme catalyses (6R)-5,10-methenyltetrahydrofolate + H2O = (6R)-10-formyltetrahydrofolate + H(+). The protein operates within one-carbon metabolism; tetrahydrofolate interconversion. In terms of biological role, catalyzes the oxidation of 5,10-methylenetetrahydrofolate to 5,10-methenyltetrahydrofolate and then the hydrolysis of 5,10-methenyltetrahydrofolate to 10-formyltetrahydrofolate. This chain is Bifunctional protein FolD, found in Tropheryma whipplei (strain TW08/27) (Whipple's bacillus).